Reading from the N-terminus, the 464-residue chain is MGVVEGLLALALVLSACVMCNGGSSSPFIRKVEKTVDMPLDSDVFAVPPGYNAPQQVHITQGDLVGKAVIVSWVTVDEPGSSEVHYWSENSDKKKIAEGKLVTYRFFNYSSGFIHHTTIRNLEYKTKYYYEVGLGNTTRQFWFVTPPEIGPDVPYTFGLIGDLGQSFDSNKTLSHYELNPRKGQTVLFVGDLSYADNYPNHDNIRWDSWGRFTERSVAYQPWIWTAGNHENHFAPEIGETVPFKPYTHRYHVPYKASQSTSPFWYSIKRASAHIIVLASYSAYGKYTPQYKWLEKELPKVNRTETPWLIVLMHSPWYNSYNYHYMEGETMRVMYEPWFVQYKVDVVFAGHVHAYERSERVSNVAYNIVNGLCAPVNDKSAPVYITIGDGGTLEGLATNMTEPQPKYSAFREASFGHAIFDITNRTHAHYSWHRNQDGVAVEADSLWSFNRYWHPVDDSTAHVSH.

An N-terminal signal peptide occupies residues 1–30; that stretch reads MGVVEGLLALALVLSACVMCNGGSSSPFIR. 2 N-linked (GlcNAc...) asparagine glycosylation sites follow: N108 and N136. D162 contributes to the Fe cation binding site. N170 is a glycosylation site (N-linked (GlcNAc...) asparagine). Positions 191 and 194 each coordinate Fe cation. D191 contributes to the Zn(2+) binding site. N228 is a Zn(2+) binding site. Residue N228 participates in substrate binding. N-linked (GlcNAc...) asparagine glycosylation is present at N301. Position 313 (H313) interacts with Zn(2+). H323 serves as the catalytic Proton donor. Residue H350 participates in Zn(2+) binding. 350–352 is a binding site for substrate; that stretch reads HVH. Fe cation is bound at residue H352. 2 N-linked (GlcNAc...) asparagine glycosylation sites follow: N398 and N423.

The protein belongs to the metallophosphoesterase superfamily. Purple acid phosphatase family. Homodimer; disulfide-linked. It depends on Fe cation as a cofactor. Requires Zn(2+) as cofactor. The cofactor is Mn(2+). Cu(2+) is required as a cofactor. Mg(2+) serves as cofactor.

Its subcellular location is the secreted. The catalysed reaction is a phosphate monoester + H2O = an alcohol + phosphate. The chain is Purple acid phosphatase from Glycine max (Soybean).